A 304-amino-acid polypeptide reads, in one-letter code: Release factor glutamine methyltransferase (304 aa).

S-adenosyl-L-methionine contacts are provided by aspartate 144 and asparagine 188. 188-191 (NPPY) contacts substrate.

The protein belongs to the protein N5-glutamine methyltransferase family. PrmC subfamily.

The enzyme catalyses L-glutaminyl-[peptide chain release factor] + S-adenosyl-L-methionine = N(5)-methyl-L-glutaminyl-[peptide chain release factor] + S-adenosyl-L-homocysteine + H(+). Its function is as follows. Methylates the class 1 translation termination release factors RF1/PrfA and RF2/PrfB on the glutamine residue of the universally conserved GGQ motif. The sequence is that of Release factor glutamine methyltransferase from Mycobacterium tuberculosis (strain ATCC 25618 / H37Rv).